A 132-amino-acid polypeptide reads, in one-letter code: Small ribosomal subunit protein uS8 (132 aa).

The protein belongs to the universal ribosomal protein uS8 family. Part of the 30S ribosomal subunit. Contacts proteins S5 and S12.

Functionally, one of the primary rRNA binding proteins, it binds directly to 16S rRNA central domain where it helps coordinate assembly of the platform of the 30S subunit. The protein is Small ribosomal subunit protein uS8 of Agrobacterium fabrum (strain C58 / ATCC 33970) (Agrobacterium tumefaciens (strain C58)).